Reading from the N-terminus, the 82-residue chain is Defensin-like protein 275 (82 aa).

A signal peptide spans 1 to 23 (MALSKFQLVALLITYTLLFSCQS). 4 disulfide bridges follow: Cys36-Cys78, Cys42-Cys65, Cys48-Cys76, and Cys52-Cys77.

This sequence belongs to the DEFL family.

The protein resides in the secreted. This chain is Defensin-like protein 275, found in Arabidopsis thaliana (Mouse-ear cress).